The following is a 638-amino-acid chain: Octopamine receptor 1 (638 aa).

Over M1–D28 the chain is Extracellular. The chain crosses the membrane as a helical span at residues V29–V53. The Cytoplasmic segment spans residues A54–N64. The helical transmembrane segment at V65 to V87 threads the bilayer. At N88–Q102 the chain is on the extracellular side. Residues C101 and C230 are joined by a disulfide bond. The helical transmembrane segment at V103–L124 threads the bilayer. At D125 to T147 the chain is on the cytoplasmic side. A helical transmembrane segment spans residues L148–W167. The Extracellular segment spans residues N168 to R239. Residues N178, N207, and N215 are each glycosylated (N-linked (GlcNAc...) asparagine). A helical membrane pass occupies residues I240–L259. The Cytoplasmic portion of the chain corresponds to Q260–T520. The helical transmembrane segment at L521–C545 threads the bilayer. Residues E546–P551 are Extracellular-facing. Residues I552–F575 traverse the membrane as a helical segment. The Cytoplasmic portion of the chain corresponds to S576 to T638. Positions D618 to T638 are disordered.

Belongs to the G-protein coupled receptor 1 family. Expressed in the central nervous system.

It localises to the cell membrane. Its function is as follows. G-protein coupled receptor for octopamine (OA), which is a neurotransmitter, neurohormone, and neuromodulator in invertebrates. Activation of this receptor by octopamine induces an increase in both inositol phosphates and cyclic AMP. The coupling to adenylyl cyclase seems to be less efficient than the coupling to phospholipase C. The rank order of potency for agonists is p-synephrine &gt;= clonidine &gt; p-octopamine = xylometazoline = phenylephrine = oxymetazoline &gt; B-HT920 &gt; serotonin = p-tyramine &gt; epinephrine &gt; norepinephrine &gt; methoxamine = dopamine = histamine. For antagonists, the rank order is yohimbine &gt; chlopromazine / spiperone &gt; phentolamine &gt; mianserine &gt; rauwolscine &gt; prazosin &gt; alprenolol / propanolol &gt; pindolol. The polypeptide is Octopamine receptor 1 (Lymnaea stagnalis (Great pond snail)).